A 195-amino-acid polypeptide reads, in one-letter code: Cysteine/O-acetylserine efflux protein (195 aa).

Residues 1-7 (MTPTLLS) are Periplasmic-facing. Residues 8–28 (AFWTYTLITAMTPGPNNILAL) form a helical membrane-spanning segment. Topologically, residues 29–46 (SSATTHGFHQSTRVLAGM) are cytoplasmic. A helical transmembrane segment spans residues 47-67 (SLGFLIVMLLCAGISFSLAVI). Over 68–69 (DP) the chain is Periplasmic. The helical transmembrane segment at 70 to 90 (AAVHLLSWAGAAYIVWLAWKI) threads the bilayer. The Cytoplasmic segment spans residues 91-104 (ATSPTKEDGLQTKP). Residues 105–125 (ISFWASFALQFVNVKIILYGV) traverse the membrane as a helical segment. Over 126-141 (TALSTFVLPQTQALSW) the chain is Periplasmic. Residues 142–162 (IVGVSVLLAMIGTFGNVCWAL) traverse the membrane as a helical segment. Topologically, residues 163–176 (AGHLFQRLFRQYGR) are cytoplasmic. A helical membrane pass occupies residues 177 to 194 (QLNIVLALLLIYCAVRIF). Tyrosine 195 is a topological domain (periplasmic).

Belongs to the Rht family.

It is found in the cell inner membrane. It catalyses the reaction O-acetyl-L-serine(in) = O-acetyl-L-serine(out). It carries out the reaction L-cysteine(in) = L-cysteine(out). Functionally, exporter of O-acetylserine (OAS) and cysteine. This chain is Cysteine/O-acetylserine efflux protein (eamB), found in Escherichia coli O157:H7.